Consider the following 351-residue polypeptide: Probable aldo-keto reductase 2 (351 aa).

Tyrosine 67 functions as the Proton donor in the catalytic mechanism. Histidine 134 is a binding site for substrate. 213 to 223 is an NADP(+) binding site; that stretch reads SPLGRGFFSAG. Residues 317–351 are disordered; the sequence is YASTDDVRGDRYPQAMANTTWQNSETPPLSSWKAQ. Residues 332–351 show a composition bias toward polar residues; the sequence is MANTTWQNSETPPLSSWKAQ.

The protein belongs to the aldo/keto reductase family.

This chain is Probable aldo-keto reductase 2, found in Oryza sativa subsp. japonica (Rice).